The following is a 420-amino-acid chain: Ammonium transporter Amt2 (420 aa).

11 helical membrane-spanning segments follow: residues 34 to 54 (VFFL…FAML), 71 to 91 (NMVD…ILCS), 120 to 140 (SWFF…GGVA), 149 to 169 (VLIS…LGPW), 180 to 200 (AGSL…IAAL), 220 to 240 (IPMA…FNVG), 250 to 270 (GLVC…ALIA), 273 to 293 (NDVL…CSGT), 295 to 315 (VVSP…VPIV), 339 to 359 (VIGA…AGGV), and 365 to 385 (IIGA…LAKI).

It belongs to the ammonia transporter channel (TC 1.A.11.2) family. As to quaternary structure, homotrimer. Interacts and forms a complex with GlnK2.

The protein localises to the cell membrane. Functionally, involved in the uptake of ammonium/ammonia (NH(4)(+)/NH(3)). Transport is electrogenic. This chain is Ammonium transporter Amt2, found in Methanocaldococcus jannaschii (strain ATCC 43067 / DSM 2661 / JAL-1 / JCM 10045 / NBRC 100440) (Methanococcus jannaschii).